The chain runs to 102 residues: uncharacterized protein (102 aa).

A helical transmembrane segment spans residues 36-55 (IISLLAIFIKMCLWLWKQFL).

The protein localises to the membrane. This is an uncharacterized protein from Homo sapiens (Human).